A 63-amino-acid chain; its full sequence is Protein Wfdc21 (63 aa).

The first 24 residues, 1 to 24 (MKLGAFLLLVSLITLSLEVQELQA), serve as a signal peptide directing secretion. A WAP; atypical domain is found at 25 to 63 (AVRPLQLLGTCAELCRGDWDCGPEEQCVSIGCSHICTTN). Intrachain disulfides connect Cys-35–Cys-56, Cys-39–Cys-51, and Cys-45–Cys-60.

Predominantly expressed in white adipose tissue and liver.

It is found in the secreted. May promote activation of the metalloproteinase MMP2. The sequence is that of Protein Wfdc21 from Mus musculus (Mouse).